The following is a 209-amino-acid chain: Uracil phosphoribosyltransferase (209 aa).

Residues R79, R104, and 131–139 (DPMLATGGS) each bind 5-phospho-alpha-D-ribose 1-diphosphate. Uracil contacts are provided by residues I194 and 199–201 (GDA). Residue D200 participates in 5-phospho-alpha-D-ribose 1-diphosphate binding.

This sequence belongs to the UPRTase family. The cofactor is Mg(2+).

It carries out the reaction UMP + diphosphate = 5-phospho-alpha-D-ribose 1-diphosphate + uracil. Its pathway is pyrimidine metabolism; UMP biosynthesis via salvage pathway; UMP from uracil: step 1/1. With respect to regulation, allosterically activated by GTP. Catalyzes the conversion of uracil and 5-phospho-alpha-D-ribose 1-diphosphate (PRPP) to UMP and diphosphate. This chain is Uracil phosphoribosyltransferase, found in Lachnoclostridium phytofermentans (strain ATCC 700394 / DSM 18823 / ISDg) (Clostridium phytofermentans).